Here is a 210-residue protein sequence, read N- to C-terminus: Dephospho-CoA kinase (210 aa).

In terms of domain architecture, DPCK spans W4–K202. G12–A17 contacts ATP.

It belongs to the CoaE family.

It is found in the cytoplasm. It carries out the reaction 3'-dephospho-CoA + ATP = ADP + CoA + H(+). It participates in cofactor biosynthesis; coenzyme A biosynthesis; CoA from (R)-pantothenate: step 5/5. In terms of biological role, catalyzes the phosphorylation of the 3'-hydroxyl group of dephosphocoenzyme A to form coenzyme A. The chain is Dephospho-CoA kinase from Neisseria meningitidis serogroup A / serotype 4A (strain DSM 15465 / Z2491).